The chain runs to 2785 residues: Testis-expressed protein 15 (2785 aa).

Residues 262–274 (SSSFPSSLSNAFS) are compositionally biased toward low complexity. Disordered regions lie at residues 262 to 331 (SSSF…PSSD), 596 to 620 (EQRDDKNPNEAKEHNTDNINGSEKQ), 661 to 683 (NGKPAETASSESEAVEQRHAPND), 904 to 924 (TESTEPETNKEGNASGFGMCS), 943 to 1064 (VQES…QGRI), 2276 to 2458 (NRQE…TNDK), 2470 to 2511 (DIDA…LVPD), and 2571 to 2601 (TQPIKSESPKKSMTDAPNPNTAPFGSYGNSA). The span at 275-286 (DVRKQKHSEEQV) shows a compositional bias: basic and acidic residues. Residues 314–331 (TCSNDSQGHFSQESPSSD) are compositionally biased toward polar residues. Residues 596 to 611 (EQRDDKNPNEAKEHNT) show a composition bias toward basic and acidic residues. Composition is skewed to polar residues over residues 962–989 (HNTHVDQGSGKPNNDSLSTEPSNVTVMN) and 1021–1031 (HASSSRGQNIA). The span at 1033-1042 (KDLREHETHE) shows a compositional bias: basic and acidic residues. Composition is skewed to polar residues over residues 1049–1064 (SHGSSDRFSSLSQGRI), 2291–2314 (DSSQPGVSEQTPPGTECTVKNISD), 2327–2338 (EVSQGKGNTDTV), 2353–2387 (NIQTVSKHPSTTGSPPNDENKIGSNSSDSLKSISA), 2394–2415 (RQSSVLGSVSPAESVQDTCTPK), 2431–2454 (ASLTEQQENSNVIEKRNGNSSVAE), 2491–2502 (DHTQISPSNLTA), and 2585–2601 (DAPNPNTAPFGSYGNSA).

It belongs to the TEX15 family. Interacts with PIWIL4. Interacts with PIWIL2. In terms of tissue distribution, detected in testis and ovary, and at lower levels in lung and brain.

The protein resides in the cytoplasm. It localises to the nucleus. Required during spermatogenesis for normal chromosome synapsis and meiotic recombination in germ cells. Necessary for formation of DMC1 and RAD51 foci on meiotic chromosomes, suggesting a specific role in DNA double-stranded break repair. Essential executor of PIWIL4-piRNA pathway directed transposon DNA methylation and silencing in the male embryonic germ cells. PIWIL4-piRNA binds to nascent transposon transcripts and interacts with TEX15, which may in turn recruit the epigenetic silencing machinery to the transposon loci. Not required for piRNA biosynthesis. The protein is Testis-expressed protein 15 of Mus musculus (Mouse).